The following is a 136-amino-acid chain: Biopolymer transport protein exbD2 (136 aa).

The Cytoplasmic portion of the chain corresponds to 1-23; that stretch reads MAFSTGGNRGPMADINVTPLVDV. A helical transmembrane segment spans residues 24–44; that stretch reads MLVLLIIFIVTAPIMTYPIAV. The Periplasmic portion of the chain corresponds to 45–136; the sequence is DLPQRVLNPP…SQMKKIGFMQ (92 aa).

This sequence belongs to the ExbD/TolR family. The accessory proteins ExbB and ExbD seem to form a complex with TonB.

It is found in the cell inner membrane. Involved in the TonB-dependent energy-dependent transport of various receptor-bound substrates. The sequence is that of Biopolymer transport protein exbD2 (exbD2) from Xanthomonas campestris pv. campestris (strain ATCC 33913 / DSM 3586 / NCPPB 528 / LMG 568 / P 25).